Here is a 64-residue protein sequence, read N- to C-terminus: Beta-defensin 2 (64 aa).

The first 22 residues, 1 to 22 (MRLHHLLLVLFFVVLSAGSGFT), serve as a signal peptide directing secretion. Cystine bridges form between Cys31/Cys60, Cys38/Cys53, and Cys43/Cys61.

Belongs to the beta-defensin family.

It is found in the secreted. Functionally, has bactericidal activity. The chain is Beta-defensin 2 (DEFB2) from Ovis aries (Sheep).